The chain runs to 287 residues: Ethylene-responsive transcription factor ERF116 (287 aa).

Positions 80 to 140 (YPVGVRPRPS…ASSGSAVSSS (61 aa)) form a DNA-binding region, AP2/ERF.

The protein belongs to the AP2/ERF transcription factor family. ERF subfamily.

The protein localises to the nucleus. Functionally, probably acts as a transcriptional activator. Binds to the GCC-box pathogenesis-related promoter element. May be involved in the regulation of gene expression by stress factors and by components of stress signal transduction pathways. This Arabidopsis thaliana (Mouse-ear cress) protein is Ethylene-responsive transcription factor ERF116 (ERF116).